The sequence spans 407 residues: Methylthioribose kinase (407 aa).

ATP-binding positions include N40, K57, and 111 to 113 (EDL). D229 provides a ligand contact to substrate. 246-248 (DAE) is a binding site for ATP. Position 344 (R344) interacts with substrate.

This sequence belongs to the methylthioribose kinase family. In terms of assembly, homodimer.

The enzyme catalyses 5-(methylsulfanyl)-D-ribose + ATP = 5-(methylsulfanyl)-alpha-D-ribose 1-phosphate + ADP + H(+). Its pathway is amino-acid biosynthesis; L-methionine biosynthesis via salvage pathway; S-methyl-5-thio-alpha-D-ribose 1-phosphate from S-methyl-5'-thioadenosine (hydrolase route): step 2/2. In terms of biological role, catalyzes the phosphorylation of methylthioribose into methylthioribose-1-phosphate. This chain is Methylthioribose kinase, found in Yersinia pseudotuberculosis serotype O:1b (strain IP 31758).